A 98-amino-acid chain; its full sequence is Bombyxin E-1 (98 aa).

Residues 1 to 19 (MNRPVFLVLLLTGFLCIAA) form the signal peptide. Glutamine 20 is modified (pyrrolidone carboxylic acid). Disulfide bonds link cysteine 29–cysteine 85, cysteine 41–cysteine 98, and cysteine 84–cysteine 89. The propeptide at 50-75 (SESSLASYSSRGWPWLPTPNFNKRAI) is c peptide like.

It belongs to the insulin family. Heterodimer of a B chain and an A chain linked by two disulfide bonds.

Its subcellular location is the secreted. PTTH is a brain peptide responsible for activation of prothoracic glands to produce ecdysone in insects. This chain is Bombyxin E-1 (BBXE1), found in Bombyx mori (Silk moth).